The primary structure comprises 123 residues: Putative iron-sulfur cluster insertion protein ErpA (123 aa).

Iron-sulfur cluster-binding residues include Cys-51, Cys-115, and Cys-117.

The protein belongs to the HesB/IscA family. As to quaternary structure, homodimer. The cofactor is iron-sulfur cluster.

Required for insertion of 4Fe-4S clusters. The polypeptide is Putative iron-sulfur cluster insertion protein ErpA (Burkholderia ambifaria (strain ATCC BAA-244 / DSM 16087 / CCUG 44356 / LMG 19182 / AMMD) (Burkholderia cepacia (strain AMMD))).